Here is a 143-residue protein sequence, read N- to C-terminus: ATP synthase epsilon chain (143 aa).

The protein belongs to the ATPase epsilon chain family. In terms of assembly, F-type ATPases have 2 components, CF(1) - the catalytic core - and CF(0) - the membrane proton channel. CF(1) has five subunits: alpha(3), beta(3), gamma(1), delta(1), epsilon(1). CF(0) has three main subunits: a, b and c.

The protein resides in the cell inner membrane. Its function is as follows. Produces ATP from ADP in the presence of a proton gradient across the membrane. In Dichelobacter nodosus (strain VCS1703A), this protein is ATP synthase epsilon chain.